Reading from the N-terminus, the 615-residue chain is Granule-bound starch synthase 1, chloroplastic/amyloplastic (615 aa).

Residues 1–70 (MAALVTSQLA…DRRCLSMVVR (70 aa)) constitute a chloroplast transit peptide. Lysine 91 is an ADP-alpha-D-glucose binding site.

The protein belongs to the glycosyltransferase 1 family. Bacterial/plant glycogen synthase subfamily. As to expression, found in seeds and pollen.

The protein localises to the plastid. Its subcellular location is the chloroplast. It localises to the amyloplast. The catalysed reaction is an NDP-alpha-D-glucose + [(1-&gt;4)-alpha-D-glucosyl](n) = [(1-&gt;4)-alpha-D-glucosyl](n+1) + a ribonucleoside 5'-diphosphate + H(+). Its pathway is glycan biosynthesis; starch biosynthesis. This is Granule-bound starch synthase 1, chloroplastic/amyloplastic (WAXY) from Triticum aestivum (Wheat).